The chain runs to 369 residues: Phospho-N-acetylmuramoyl-pentapeptide-transferase (369 aa).

10 helical membrane passes run 13–33 (ISGI…ALTL), 49–69 (LPLL…VPLL), 95–115 (MGGI…SNFA), 119–139 (LAVS…DWQI), 154–174 (LALQ…NQPA), 183–203 (WVSF…FVLV), 215–235 (IDGL…AIVA), 237–257 (TSPA…GFLA), 281–301 (AVAL…IFFV), and 346–366 (VVSS…AIAS).

This sequence belongs to the glycosyltransferase 4 family. MraY subfamily. Requires Mg(2+) as cofactor.

The protein localises to the cell inner membrane. It carries out the reaction UDP-N-acetyl-alpha-D-muramoyl-L-alanyl-gamma-D-glutamyl-meso-2,6-diaminopimeloyl-D-alanyl-D-alanine + di-trans,octa-cis-undecaprenyl phosphate = di-trans,octa-cis-undecaprenyl diphospho-N-acetyl-alpha-D-muramoyl-L-alanyl-D-glutamyl-meso-2,6-diaminopimeloyl-D-alanyl-D-alanine + UMP. It participates in cell wall biogenesis; peptidoglycan biosynthesis. In terms of biological role, catalyzes the initial step of the lipid cycle reactions in the biosynthesis of the cell wall peptidoglycan: transfers peptidoglycan precursor phospho-MurNAc-pentapeptide from UDP-MurNAc-pentapeptide onto the lipid carrier undecaprenyl phosphate, yielding undecaprenyl-pyrophosphoryl-MurNAc-pentapeptide, known as lipid I. The polypeptide is Phospho-N-acetylmuramoyl-pentapeptide-transferase (Nostoc sp. (strain PCC 7120 / SAG 25.82 / UTEX 2576)).